The chain runs to 711 residues: MKYAVEVNNNVEIFEINKVAKQAAGACLMKVKNTVVLATVARENTQVEEDFLPLTVQYIEKQYAAGRIPGGYIKRETKPGDFETLTSRIIDRSLRPLFPKGYAYPTQIVVFVLSADPEIDLQVVGLNAASVALYLSDIPMKAPVCGVRVGYINDSFVINPTNSELQNSALDLYVAGVKDEMLMIEMRSLPNMNGENQNMNEFSEDKMVEAIDFASKAILAGSTAYENTFSALKKPDAALEYKPEVEDENIANFIEQNFTSDVQAAINQMAKSERATELDKIVNKIMQSETAIQNEWQKNVVSNIIGKFKRKIIRSQIINERRRADGRALDEIRPISIETNILPNAHGSCLFTRGQTQALVVTTLGGETDAQVSDSLTSNTPISERFMFQYNFPGFCVGEASPLKSPGRRELGHGNLAKRALTPSVPLNNPQVIRTVSEILESNGSSSMASVCGGSLSLRAAGVSTLKLVAGVAMGLIFEDDKHAILTDIMGLEDHDGDMDFKVAGTREGITALQMDIKLGGISLEILREALNQAKDGRNYILNLMEVANDDIIINEEILPKIEIFGVDPNKMVDIIGQGGKTIKELIDKYEVSIDLERDSGEVKIQGANKINVENAKSDILNIVKKSNDFKKGSKFGHHHERKETSNFQVGEEFDGVVKKIMDFGAFISLKDGIDGLLHVSKIKTQLSEGDTLRVKVEEIKRGKISLELCE.

2 residues coordinate Mg(2+): Asp494 and Asp500. A KH domain is found at 560-620 (PKIEIFGVDP…INVENAKSDI (61 aa)). The S1 motif domain occupies 651–710 (GEEFDGVVKKIMDFGAFISLKDGIDGLLHVSKIKTQLSEGDTLRVKVEEIKRGKISLELC).

This sequence belongs to the polyribonucleotide nucleotidyltransferase family. Mg(2+) serves as cofactor.

It is found in the cytoplasm. It carries out the reaction RNA(n+1) + phosphate = RNA(n) + a ribonucleoside 5'-diphosphate. In terms of biological role, involved in mRNA degradation. Catalyzes the phosphorolysis of single-stranded polyribonucleotides processively in the 3'- to 5'-direction. This Campylobacter hominis (strain ATCC BAA-381 / DSM 21671 / CCUG 45161 / LMG 19568 / NCTC 13146 / CH001A) protein is Polyribonucleotide nucleotidyltransferase.